The following is a 301-amino-acid chain: Beta-1,3-galactosyltransferase 5 (301 aa).

Residues 1–7 (MAFPKMR) are Cytoplasmic-facing. A helical; Signal-anchor for type II membrane protein membrane pass occupies residues 8–28 (LMYVCLLVLGALCLYFSMYSL). The Lumenal portion of the chain corresponds to 29-301 (NLFKEQSFVY…LLDYWQALEN (273 aa)). N-linked (GlcNAc...) asparagine glycosylation is found at N130, N174, and N231.

The protein belongs to the glycosyltransferase 31 family.

The protein localises to the golgi apparatus membrane. The catalysed reaction is a globoside Gb4Cer (d18:1(4E)) + UDP-alpha-D-galactose = a globoside GalGb4Cer (d18:1(4E)) + UDP + H(+). The protein operates within protein modification; protein glycosylation. Catalyzes the transfer of Gal to GlcNAc-based acceptors with a preference for the core3 O-linked glycan GlcNAc(beta1,3)GalNAc structure. Can use glycolipid LC3Cer as an efficient acceptor. This chain is Beta-1,3-galactosyltransferase 5 (B3GALT5), found in Pan paniscus (Pygmy chimpanzee).